The sequence spans 85 residues: Small ribosomal subunit protein uS17 (85 aa).

It belongs to the universal ribosomal protein uS17 family. In terms of assembly, part of the 30S ribosomal subunit.

One of the primary rRNA binding proteins, it binds specifically to the 5'-end of 16S ribosomal RNA. The sequence is that of Small ribosomal subunit protein uS17 from Natranaerobius thermophilus (strain ATCC BAA-1301 / DSM 18059 / JW/NM-WN-LF).